Here is a 517-residue protein sequence, read N- to C-terminus: Lysophosphatidylcholine acyltransferase 1 (517 aa).

Topologically, residues 1-52 are cytoplasmic; that stretch reads MRFPNRKLHTAVNGGDSGVSTHFRNPFVHELRFTTLQKLKIAVMTVTLFPVR. Residues 53-73 form a helical; Signal-anchor for type II membrane protein membrane-spanning segment; that stretch reads LLFAAFMMLLAWPFAFVATVG. Topologically, residues 74 to 517 are lumenal; the sequence is RSENAVEPLS…SPRNHSKKQD (444 aa). The short motif at 129–134 is the HXXXXD motif element; sequence HSSYFD. Asparagine 207 carries an N-linked (GlcNAc...) asparagine glycan. The EF-hand domain maps to 443–478; it reads VGDLAVSELFRAIDSQDKGKITFDELCSFMEKCPDL. N-linked (GlcNAc...) asparagine glycosylation occurs at asparagine 511. A Di-lysine motif motif is present at residues 514–517; sequence KKQD.

It belongs to the 1-acyl-sn-glycerol-3-phosphate acyltransferase family.

The protein resides in the endoplasmic reticulum membrane. It is found in the golgi apparatus membrane. The protein localises to the cell membrane. It localises to the lipid droplet. It catalyses the reaction a 1-acyl-sn-glycero-3-phosphocholine + an acyl-CoA = a 1,2-diacyl-sn-glycero-3-phosphocholine + CoA. The enzyme catalyses a 1-O-alkyl-sn-glycero-3-phosphocholine + acetyl-CoA = a 1-O-alkyl-2-acetyl-sn-glycero-3-phosphocholine + CoA. It carries out the reaction a 1-acyl-sn-glycero-3-phosphate + an acyl-CoA = a 1,2-diacyl-sn-glycero-3-phosphate + CoA. The catalysed reaction is a 1-O-(1Z-alkenyl)-sn-glycero-3-phosphocholine + an acyl-CoA = a 1-O-(1Z-alkenyl)-2-acyl-sn-glycero-3-phosphocholine + CoA. It catalyses the reaction 1-acyl-sn-glycero-3-phospho-(1'-sn-glycerol) + an acyl-CoA = a 1,2-diacyl-sn-glycero-3-phospho-(1'-sn-glycerol) + CoA. The enzyme catalyses 1-hexadecanoyl-sn-glycero-3-phosphocholine + hexadecanoyl-CoA = 1,2-dihexadecanoyl-sn-glycero-3-phosphocholine + CoA. It carries out the reaction 1-O-hexadecyl-sn-glycero-3-phosphocholine + hexadecanoyl-CoA = 1-O-hexadecyl-2-hexadecanoyl-sn-glycero-3-phosphocholine + CoA. The catalysed reaction is a 1-O-(1Z-alkenyl)-sn-glycero-3-phosphocholine + hexadecanoyl-CoA = 1-O-(1Z)-alkenyl-2-hexadecanoyl-sn-glycero-3-phosphocholine + CoA. It catalyses the reaction 1-hexadecanoyl-sn-glycero-3-phospho-(1'-sn-glycerol) + hexadecanoyl-CoA = 1,2-dihexadecanoyl-sn-glycero-3-phospho-(1'-sn-glycerol) + CoA. The enzyme catalyses 1-dodecanoyl-sn-glycero-3-phosphocholine + hexadecanoyl-CoA = 1-dodecanoyl-2-hexadecanoyl-sn-glycero-3-phosphocholine + CoA. It carries out the reaction 1-tetradecanoyl-sn-glycero-3-phosphocholine + hexadecanoyl-CoA = 1-tetradecanoyl-2-hexadecanoyl-sn-glycero-3-phosphocholine + CoA. The catalysed reaction is 1-O-octadecyl-sn-glycero-3-phosphocholine + hexadecanoyl-CoA = 1-O-octadecyl-2-hexadecanoyl-sn-glycero-3-phosphocholine + CoA. It catalyses the reaction 1-octadecanoyl-sn-glycero-3-phosphocholine + hexadecanoyl-CoA = 1-octadecanoyl-2-hexadecanoyl-sn-glycero-3-phosphocholine + CoA. The enzyme catalyses 1-(9Z-octadecenoyl)-sn-glycero-3-phosphocholine + hexadecanoyl-CoA = 1-(9Z-octadecenoyl)-2-hexadecanoyl-sn-glycero-3-phosphocholine + CoA. It carries out the reaction 1-eicosanoyl-sn-glycero-3-phosphocholine + hexadecanoyl-CoA = 1-eicosanoyl-2-hexadecanoyl-sn-glycero-3-phosphocholine + CoA. The catalysed reaction is hexanoyl-CoA + 1-hexadecanoyl-sn-glycero-3-phosphocholine = 1-hexadecanoyl-2-hexanoyl-sn-glycero-3-phosphocholine + CoA. It catalyses the reaction octanoyl-CoA + 1-hexadecanoyl-sn-glycero-3-phosphocholine = 1-hexadecanoyl-2-octanoyl-sn-glycero-3-phosphocholine + CoA. The enzyme catalyses decanoyl-CoA + 1-hexadecanoyl-sn-glycero-3-phosphocholine = 1-hexadecanoyl-2-decanoyl-sn-glycero-3-phosphocholine + CoA. It carries out the reaction dodecanoyl-CoA + 1-hexadecanoyl-sn-glycero-3-phosphocholine = 1-hexadecanoyl-2-dodecanoyl-sn-glycero-3-phosphocholine + CoA. The catalysed reaction is tetradecanoyl-CoA + 1-hexadecanoyl-sn-glycero-3-phosphocholine = 1-hexadecanoyl-2-tetradecanoyl-sn-glycero-3-phosphocholine + CoA. It catalyses the reaction 1-hexadecanoyl-sn-glycero-3-phosphocholine + (9Z)-octadecenoyl-CoA = 1-hexadecanoyl-2-(9Z-octadecenoyl)-sn-glycero-3-phosphocholine + CoA. The enzyme catalyses (9Z,12Z)-octadecadienoyl-CoA + 1-hexadecanoyl-sn-glycero-3-phosphocholine = 1-hexadecanoyl-2-(9Z,12Z-octadecadienoyl)-sn-glycero-3-phosphocholine + CoA. It carries out the reaction (4Z,7Z,10Z,13Z,16Z,19Z)-docosahexaenoyl-CoA + 1-hexadecanoyl-sn-glycero-3-phosphocholine = 1-hexadecanoyl-2-(4Z,7Z,10Z,13Z,16Z,19Z-docosahexaenoyl)-sn-glycero-3-phosphocholine + CoA. The catalysed reaction is 1-hexadecanoyl-sn-glycero-3-phosphocholine + acetyl-CoA = 1-hexadecanoyl-2-acetyl-sn-glycero-3-phosphocholine + CoA. It catalyses the reaction eicosanoyl-CoA + 1-hexadecanoyl-sn-glycero-3-phosphocholine = 1-hexadecanoyl-2-eicosanoyl-sn-glycero-3-phosphocholine + CoA. The enzyme catalyses 1-O-hexadecyl-sn-glycero-3-phosphocholine + acetyl-CoA = 1-O-hexadecyl-2-acetyl-sn-glycero-3-phosphocholine + CoA. It carries out the reaction a 1-acyl-sn-glycero-3-phosphocholine + hexadecanoyl-CoA = 1-acyl-2-hexadecanoyl-sn-glycero-3-phosphocholine + CoA. The catalysed reaction is a 1-acyl-sn-glycero-3-phosphate + hexadecanoyl-CoA = 1-acyl-2-hexadecanoyl-sn-glycero-3-phosphate + CoA. It catalyses the reaction 1-acyl-sn-glycero-3-phospho-(1'-sn-glycerol) + hexadecanoyl-CoA = 1-acyl-2-hexadecanoyl-sn-glycero-3-phospho-(1'-sn-glycerol) + CoA. It functions in the pathway lipid metabolism; phospholipid metabolism. Exhibits both acyltransferase and acetyltransferase activities. Activity is calcium-independent. Catalyzes the conversion of lysophosphatidylcholine (1-acyl-sn-glycero-3-phosphocholine or LPC) into phosphatidylcholine (1,2-diacyl-sn-glycero-3-phosphocholine or PC). Catalyzes the conversion 1-acyl-sn-glycerol-3-phosphate (lysophosphatidic acid or LPA) into 1,2-diacyl-sn-glycerol-3-phosphate (phosphatidic acid or PA) by incorporating an acyl moiety at the sn-2 position of the glycerol backbone. The sequence is that of Lysophosphatidylcholine acyltransferase 1 (lpcat1) from Danio rerio (Zebrafish).